Reading from the N-terminus, the 343-residue chain is Probable dual-specificity RNA methyltransferase RlmN (343 aa).

The active-site Proton acceptor is E83. One can recognise a Radical SAM core domain in the interval Y89–D323. C96 and C328 are joined by a disulfide. [4Fe-4S] cluster-binding residues include C103, C107, and C110. S-adenosyl-L-methionine contacts are provided by residues G153–E154, S185, S209–H211, and N285. The active-site S-methylcysteine intermediate is C328.

This sequence belongs to the radical SAM superfamily. RlmN family. It depends on [4Fe-4S] cluster as a cofactor.

The protein resides in the cytoplasm. The enzyme catalyses adenosine(2503) in 23S rRNA + 2 reduced [2Fe-2S]-[ferredoxin] + 2 S-adenosyl-L-methionine = 2-methyladenosine(2503) in 23S rRNA + 5'-deoxyadenosine + L-methionine + 2 oxidized [2Fe-2S]-[ferredoxin] + S-adenosyl-L-homocysteine. It catalyses the reaction adenosine(37) in tRNA + 2 reduced [2Fe-2S]-[ferredoxin] + 2 S-adenosyl-L-methionine = 2-methyladenosine(37) in tRNA + 5'-deoxyadenosine + L-methionine + 2 oxidized [2Fe-2S]-[ferredoxin] + S-adenosyl-L-homocysteine. Functionally, specifically methylates position 2 of adenine 2503 in 23S rRNA and position 2 of adenine 37 in tRNAs. In Deinococcus deserti (strain DSM 17065 / CIP 109153 / LMG 22923 / VCD115), this protein is Probable dual-specificity RNA methyltransferase RlmN.